The primary structure comprises 195 residues: Probable GTP-binding protein EngB (195 aa).

The region spanning 22 to 195 (GRPEVALAGR…WAALLPFLTE (174 aa)) is the EngB-type G domain. GTP contacts are provided by residues 30–37 (GRSNVGKS), 57–61 (GKTQT), 75–78 (DVPG), 142–145 (TKAD), and 174–176 (FSS). 2 residues coordinate Mg(2+): Ser-37 and Thr-59.

The protein belongs to the TRAFAC class TrmE-Era-EngA-EngB-Septin-like GTPase superfamily. EngB GTPase family. It depends on Mg(2+) as a cofactor.

Functionally, necessary for normal cell division and for the maintenance of normal septation. The polypeptide is Probable GTP-binding protein EngB (Geobacillus thermodenitrificans (strain NG80-2)).